Reading from the N-terminus, the 440-residue chain is MSEMTPREIVHELDAHIIGQKKAKRSVAVALRNRWRRMQLDADFRQEVTPKNILMIGPTGVGKTEIARRLAKLANAPFIKVEATKFTEVGYVGKEVEQIIRDLTDIAIKLTREQQMGKCRQRAEEHAEERILDALLPKPKNDWDDSDSNSNTRQIFRKKLRESQLDDKEIDIDVAQPQIGIEIMSPPGMEEMTNQLQSLFKNMGQAPAKRRKMKIKEAFKLLIEEEAAKLVNQEDLKEQAIELVEQNGIVFLDEIDKICKRGETSGPDVSREGVQRDLLPLVEGCTVTTKHGMVKTDHILFIASGAFQMSKPSDLIPELQGRLPIRVELDALTADDFKRILTEPHASLTEQYIALMATEGVIIEFTESGIESIAKAAWQVNERTENIGARRLHTVMEKLMEDISYEASDKSGSSFVIDADYVSAHLDNLVQDEDLSRFIL.

ATP contacts are provided by residues Ile18, 60–65 (GVGKTE), Asp253, Glu318, and Arg390.

It belongs to the ClpX chaperone family. HslU subfamily. A double ring-shaped homohexamer of HslV is capped on each side by a ring-shaped HslU homohexamer. The assembly of the HslU/HslV complex is dependent on binding of ATP.

The protein resides in the cytoplasm. ATPase subunit of a proteasome-like degradation complex; this subunit has chaperone activity. The binding of ATP and its subsequent hydrolysis by HslU are essential for unfolding of protein substrates subsequently hydrolyzed by HslV. HslU recognizes the N-terminal part of its protein substrates and unfolds these before they are guided to HslV for hydrolysis. In Shewanella oneidensis (strain ATCC 700550 / JCM 31522 / CIP 106686 / LMG 19005 / NCIMB 14063 / MR-1), this protein is ATP-dependent protease ATPase subunit HslU.